A 299-amino-acid chain; its full sequence is Bifunctional protein FolD (299 aa).

Residues 169–171 (GRS), S194, and I235 each bind NADP(+).

This sequence belongs to the tetrahydrofolate dehydrogenase/cyclohydrolase family. In terms of assembly, homodimer.

The catalysed reaction is (6R)-5,10-methylene-5,6,7,8-tetrahydrofolate + NADP(+) = (6R)-5,10-methenyltetrahydrofolate + NADPH. It carries out the reaction (6R)-5,10-methenyltetrahydrofolate + H2O = (6R)-10-formyltetrahydrofolate + H(+). Its pathway is one-carbon metabolism; tetrahydrofolate interconversion. Functionally, catalyzes the oxidation of 5,10-methylenetetrahydrofolate to 5,10-methenyltetrahydrofolate and then the hydrolysis of 5,10-methenyltetrahydrofolate to 10-formyltetrahydrofolate. This is Bifunctional protein FolD from Trichormus variabilis (strain ATCC 29413 / PCC 7937) (Anabaena variabilis).